The chain runs to 381 residues: 1-deoxy-D-xylulose 5-phosphate reductoisomerase (381 aa).

Residues threonine 10, glycine 11, serine 12, isoleucine 13, glycine 36, lysine 37, asparagine 38, and asparagine 122 each contribute to the NADPH site. A 1-deoxy-D-xylulose 5-phosphate-binding site is contributed by lysine 123. Glutamate 124 contributes to the NADPH binding site. Residue aspartate 148 coordinates Mn(2+). Serine 149, glutamate 150, serine 173, and histidine 196 together coordinate 1-deoxy-D-xylulose 5-phosphate. Position 150 (glutamate 150) interacts with Mn(2+). An NADPH-binding site is contributed by glycine 202. Serine 209, asparagine 214, lysine 215, and glutamate 218 together coordinate 1-deoxy-D-xylulose 5-phosphate. Glutamate 218 is a binding site for Mn(2+).

This sequence belongs to the DXR family. The cofactor is Mg(2+). Mn(2+) serves as cofactor.

The catalysed reaction is 2-C-methyl-D-erythritol 4-phosphate + NADP(+) = 1-deoxy-D-xylulose 5-phosphate + NADPH + H(+). The protein operates within isoprenoid biosynthesis; isopentenyl diphosphate biosynthesis via DXP pathway; isopentenyl diphosphate from 1-deoxy-D-xylulose 5-phosphate: step 1/6. Its function is as follows. Catalyzes the NADPH-dependent rearrangement and reduction of 1-deoxy-D-xylulose-5-phosphate (DXP) to 2-C-methyl-D-erythritol 4-phosphate (MEP). The sequence is that of 1-deoxy-D-xylulose 5-phosphate reductoisomerase from Desulfitobacterium hafniense (strain Y51).